A 424-amino-acid chain; its full sequence is D-inositol 3-phosphate glycosyltransferase (424 aa).

Residues His9, 20–25 (DAGGMN), Lys78, Tyr110, Thr134, and Arg154 contribute to the 1D-myo-inositol 3-phosphate site. Gly23 contacts UDP-N-acetyl-alpha-D-glucosamine. Residues Arg231, Lys236, and Arg295 each contribute to the UDP-N-acetyl-alpha-D-glucosamine site. Positions 304, 305, and 307 each coordinate Mg(2+). UDP-N-acetyl-alpha-D-glucosamine is bound by residues Glu317 and Glu325. Residue Thr331 participates in Mg(2+) binding.

Belongs to the glycosyltransferase group 1 family. MshA subfamily. Homodimer.

The catalysed reaction is 1D-myo-inositol 3-phosphate + UDP-N-acetyl-alpha-D-glucosamine = 1D-myo-inositol 2-acetamido-2-deoxy-alpha-D-glucopyranoside 3-phosphate + UDP + H(+). Catalyzes the transfer of a N-acetyl-glucosamine moiety to 1D-myo-inositol 3-phosphate to produce 1D-myo-inositol 2-acetamido-2-deoxy-glucopyranoside 3-phosphate in the mycothiol biosynthesis pathway. The polypeptide is D-inositol 3-phosphate glycosyltransferase (Corynebacterium urealyticum (strain ATCC 43042 / DSM 7109)).